The primary structure comprises 122 residues: Putative ankyrin repeat protein L22 (122 aa).

ANK repeat units follow at residues 3–32 (DNNY…DIKA), 33–62 (DDDY…DIRV), 63–92 (NNDY…NIRA), and 94–122 (DDYA…VLNQ).

This is Putative ankyrin repeat protein L22 from Acanthamoeba polyphaga (Amoeba).